A 91-amino-acid chain; its full sequence is Sec-independent protein translocase protein TatA (91 aa).

A helical transmembrane segment spans residues 1–21 (MGIFDWKHWIVILIVVVLVFG). The tract at residues 42-91 (AMNDDDKPAEQPAPQPQQAQAAPQGSPLNQPHTIDAQAHKVDEPIRKDQV) is disordered. A compositionally biased stretch (low complexity) spans 51 to 65 (EQPAPQPQQAQAAPQ). Residues 78-91 (QAHKVDEPIRKDQV) are compositionally biased toward basic and acidic residues.

It belongs to the TatA/E family. The Tat system comprises two distinct complexes: a TatABC complex, containing multiple copies of TatA, TatB and TatC subunits, and a separate TatA complex, containing only TatA subunits. Substrates initially bind to the TatABC complex, which probably triggers association of the separate TatA complex to form the active translocon.

The protein localises to the cell inner membrane. Part of the twin-arginine translocation (Tat) system that transports large folded proteins containing a characteristic twin-arginine motif in their signal peptide across membranes. TatA could form the protein-conducting channel of the Tat system. The chain is Sec-independent protein translocase protein TatA from Pseudomonas savastanoi pv. phaseolicola (strain 1448A / Race 6) (Pseudomonas syringae pv. phaseolicola (strain 1448A / Race 6)).